A 206-amino-acid chain; its full sequence is Transcriptional regulator GfcR (206 aa).

This sequence belongs to the purine/pyrimidine phosphoribosyltransferase family. GfcR subfamily.

The protein is Transcriptional regulator GfcR of Methanosphaerula palustris (strain ATCC BAA-1556 / DSM 19958 / E1-9c).